The primary structure comprises 335 residues: Tryptophan--tRNA ligase (335 aa).

ATP-binding positions include 9 to 11 (QST) and 17 to 18 (GN). Residues 10-18 (STNSLTLGN) carry the 'HIGH' region motif. Aspartate 137 contributes to the L-tryptophan binding site. Residues 149-151 (GKD), isoleucine 189, and 198-202 (KMSKS) contribute to the ATP site. The 'KMSKS' region motif lies at 198 to 202 (KMSKS).

Belongs to the class-I aminoacyl-tRNA synthetase family. In terms of assembly, homodimer.

It localises to the cytoplasm. The enzyme catalyses tRNA(Trp) + L-tryptophan + ATP = L-tryptophyl-tRNA(Trp) + AMP + diphosphate + H(+). Its function is as follows. Catalyzes the attachment of tryptophan to tRNA(Trp). The chain is Tryptophan--tRNA ligase from Malacoplasma penetrans (strain HF-2) (Mycoplasma penetrans).